The following is a 255-amino-acid chain: Triosephosphate isomerase (255 aa).

9–11 contributes to the substrate binding site; it reads NWK. Histidine 95 functions as the Electrophile in the catalytic mechanism. Glutamate 167 functions as the Proton acceptor in the catalytic mechanism. Substrate contacts are provided by residues glycine 173, serine 212, and 233–234; that span reads GG.

Belongs to the triosephosphate isomerase family. As to quaternary structure, homodimer.

It is found in the cytoplasm. It carries out the reaction D-glyceraldehyde 3-phosphate = dihydroxyacetone phosphate. It participates in carbohydrate biosynthesis; gluconeogenesis. Its pathway is carbohydrate degradation; glycolysis; D-glyceraldehyde 3-phosphate from glycerone phosphate: step 1/1. Involved in the gluconeogenesis. Catalyzes stereospecifically the conversion of dihydroxyacetone phosphate (DHAP) to D-glyceraldehyde-3-phosphate (G3P). The chain is Triosephosphate isomerase from Salmonella agona (strain SL483).